Consider the following 325-residue polypeptide: Small ribosomal subunit protein uS3 (325 aa).

A KH type-2 domain is found at 38 to 106 (IRKMMSKGME…QVQLNILEVK (69 aa)). The disordered stretch occupies residues 217-325 (EALLRQQRRE…AQGAPEKAEG (109 aa)). Positions 222 to 232 (QQRRERPRRGP) are enriched in basic residues. Over residues 285-316 (TESAAVEGTPVETPAVTPETTAAPAAVTTAEA) the composition is skewed to low complexity.

The protein belongs to the universal ribosomal protein uS3 family. In terms of assembly, part of the 30S ribosomal subunit. Forms a tight complex with proteins S10 and S14.

Its function is as follows. Binds the lower part of the 30S subunit head. Binds mRNA in the 70S ribosome, positioning it for translation. This is Small ribosomal subunit protein uS3 from Parafrankia sp. (strain EAN1pec).